Consider the following 643-residue polypeptide: MGESARGGGSAETTGGLAAAVKTYLEYTPTGESIPAAAWRRRHRNVRVFVLAHIPLLLALGLYEGTESAVTGATIPPTPGILIAAELGIVGALVGLASIPSVSRRGRTALASTAVLASSVVLVQFSGGFIEAHFHFFVGMAVIAVYEDWLPFALGLVYVVFTHGVFGMINAERVYNHTAAINNPWVWGGIHGAFVLLLAGALMANWYSTERSREASQKRLEEARQKAQQVEDLEARQAEIEAEKAEAKRLKADAEEAREAAEAQQREVAALNERLEATANTYGAAMARAADGDLSVRLDPDVENDAMAAIAASFNEMLDETETTIREIQAVASDVAAASEDADAGVVEIEDASGQVSETVQEIAAGADEQREKLETVSGEMTDLSAAIEEVAASADSVAERSHETAAVAGDGEQTAEQAIADSRTVQSAVESTVQNVEALDDQLAEISEIVDLISDVAEQTNMLALNANIEAARADKSGDGFAVVADEVKDLAEETRASAGDIEALVADIDAQMQATVTEARTADESVQDAISAVDAVVDAFGTVAENAEETDTGVQEISTTTDDQAASTEEAVSMIAEVSDISTATAADAQQASTAAEQQTTAAATISENTAALREQADRLQGLVSTFDVHDESASTAARSE.

A run of 5 helical transmembrane segments spans residues 48–68 (VFVL…GTES), 79–99 (PGIL…LASI), 115–134 (VLAS…EAHF), 149–169 (WLPF…FGMI), and 184–204 (PWVW…ALMA). In terms of domain architecture, HAMP spans 273-326 (ERLEATANTYGAAMARAADGDLSVRLDPDVENDAMAAIAASFNEMLDETETTIR). One can recognise a Methyl-accepting transducer domain in the interval 345–581 (GVVEIEDASG…EAVSMIAEVS (237 aa)).

This sequence belongs to the methyl-accepting chemotaxis (MCP) protein family. Methylated by CheR.

Its subcellular location is the cell membrane. Functionally, potentially involved in chemo- or phototactic signal transduction. In Halobacterium salinarum (strain ATCC 29341 / DSM 671 / R1), this protein is Transducer protein Htr8 (htr8).